The primary structure comprises 367 residues: MTDNSQVKVIVGMSGGVDSSVSAYLLQQQGYLVEGLFMKNWEEDDTDQYCAAAQDLEDAQSVCDKLGIPLHTINFAAEYWDNVFEHFLAEYKAGRTPNPDIMCNKEIKFKAFLEFAAEDLGADYIATGHYVRRREVDGHVQLLRGLDNNKDQSYFLYAIGEKQIAKSLFPVGELEKPEVRRIAEQQDLITHNKKDSTGICFIGERKFTDFLQEYLPAQPGDIVTPTGEVIGQHQGLMYHTLGQRKGLGIGGLQNSNENPWYVVGKDMDNNRLLVAQGADHPALFSYGLIAKQCDWVDRTPKKSTFRCTVKTRYRQQDIPCTVTPLDDDTLKVIFDTAQAAVTPGQSAVFYNDEVCLGGAIIEEHLQK.

ATP contacts are provided by residues 12-19 and methionine 38; that span reads GMSGGVDS. Residues 98 to 100 form an interaction with target base in tRNA region; sequence NPD. The active-site Nucleophile is cysteine 103. Cysteine 103 and cysteine 200 form a disulfide bridge. An ATP-binding site is contributed by glycine 128. The interaction with tRNA stretch occupies residues 150–152; sequence KDQ. The active-site Cysteine persulfide intermediate is the cysteine 200. The tract at residues 312–313 is interaction with tRNA; sequence RY.

Belongs to the MnmA/TRMU family.

Its subcellular location is the cytoplasm. The enzyme catalyses S-sulfanyl-L-cysteinyl-[protein] + uridine(34) in tRNA + AH2 + ATP = 2-thiouridine(34) in tRNA + L-cysteinyl-[protein] + A + AMP + diphosphate + H(+). Catalyzes the 2-thiolation of uridine at the wobble position (U34) of tRNA, leading to the formation of s(2)U34. The chain is tRNA-specific 2-thiouridylase MnmA from Psychromonas ingrahamii (strain DSM 17664 / CCUG 51855 / 37).